A 362-amino-acid chain; its full sequence is MTIEIHDLSKQFGSFTALNDINLKVNPGELLALLGPSGSGKTTLLRVIAGLETADSGQVLFNEEDSTDKHIRDRHVGFVFQHYALFRNMTIFENVAFGLRVRPRKQRPNAPEINHRVTELLQLVQLDWLADRYPHQLSGGQRQRIALARALAVEPSVLLLDEPFGALDAKVRKELRAWLRKLHDDMHITSVFVTHDQEEALEVADRIVVMNRGRIEQIGTPDEVYEKPANPFVYEFLGHVNLFHGRVHQGHAWIGDLEVDAPEYSEAEDLSAIAYVRPHDIEVDRTLNGEPALAAHIVHILAIGPVVRLELAGKDNQSTNSIYAEISKERFRELQLARGDQVFIKPRKLDLFPNHAQNGSIH.

The 235-residue stretch at 3–237 (IEIHDLSKQF…PANPFVYEFL (235 aa)) folds into the ABC transporter domain. 35–42 (GPSGSGKT) lines the ATP pocket.

Belongs to the ABC transporter superfamily. Sulfate/tungstate importer (TC 3.A.1.6) family. The complex is composed of two ATP-binding proteins (CysA), two transmembrane proteins (CysT and CysW) and a solute-binding protein (CysP).

The protein localises to the cell inner membrane. It carries out the reaction sulfate(out) + ATP + H2O = sulfate(in) + ADP + phosphate + H(+). The enzyme catalyses thiosulfate(out) + ATP + H2O = thiosulfate(in) + ADP + phosphate + H(+). In terms of biological role, part of the ABC transporter complex CysAWTP involved in sulfate/thiosulfate import. Responsible for energy coupling to the transport system. This is Sulfate/thiosulfate import ATP-binding protein CysA from Nitrosomonas europaea (strain ATCC 19718 / CIP 103999 / KCTC 2705 / NBRC 14298).